We begin with the raw amino-acid sequence, 190 residues long: Elongation factor P-like protein (190 aa).

This sequence belongs to the elongation factor P family.

In Yersinia enterocolitica serotype O:8 / biotype 1B (strain NCTC 13174 / 8081), this protein is Elongation factor P-like protein.